A 557-amino-acid chain; its full sequence is Urocanate hydratase (557 aa).

Residues 53 to 54, glutamine 131, 177 to 179, glutamate 197, arginine 202, 243 to 244, 264 to 268, 274 to 275, and tyrosine 323 each bind NAD(+); these read GG, GMG, NA, QTSAH, and YL. Cysteine 411 is an active-site residue. Residue glycine 493 participates in NAD(+) binding.

It belongs to the urocanase family. It depends on NAD(+) as a cofactor.

The protein resides in the cytoplasm. It catalyses the reaction 4-imidazolone-5-propanoate = trans-urocanate + H2O. Its pathway is amino-acid degradation; L-histidine degradation into L-glutamate; N-formimidoyl-L-glutamate from L-histidine: step 2/3. Functionally, catalyzes the conversion of urocanate to 4-imidazolone-5-propionate. This Pseudomonas putida (strain GB-1) protein is Urocanate hydratase.